The sequence spans 281 residues: Acetyl-coenzyme A carboxylase carboxyl transferase subunit beta (281 aa).

Residues 24–281 (GLWYKSPKGK…TKLLTMLANN (258 aa)) form the CoA carboxyltransferase N-terminal domain.

It belongs to the AccD/PCCB family. Acetyl-CoA carboxylase is a heterohexamer composed of biotin carboxyl carrier protein (AccB), biotin carboxylase (AccC) and two subunits each of ACCase subunit alpha (AccA) and ACCase subunit beta (AccD).

Its subcellular location is the cytoplasm. The enzyme catalyses N(6)-carboxybiotinyl-L-lysyl-[protein] + acetyl-CoA = N(6)-biotinyl-L-lysyl-[protein] + malonyl-CoA. It functions in the pathway lipid metabolism; malonyl-CoA biosynthesis; malonyl-CoA from acetyl-CoA: step 1/1. In terms of biological role, component of the acetyl coenzyme A carboxylase (ACC) complex. Biotin carboxylase (BC) catalyzes the carboxylation of biotin on its carrier protein (BCCP) and then the CO(2) group is transferred by the transcarboxylase to acetyl-CoA to form malonyl-CoA. The polypeptide is Acetyl-coenzyme A carboxylase carboxyl transferase subunit beta (Amoebophilus asiaticus (strain 5a2)).